The chain runs to 510 residues: Scarecrow-like protein 29 (510 aa).

The tract at residues 90–142 (LDLPPEIQQPNDQSRKRSHDGFLEAQQVKKSARSKRKAIKSSEKSSKDGNKEG) is disordered. Residues 102–111 (QSRKRSHDGF) show a composition bias toward basic and acidic residues. The span at 119–128 (KSARSKRKAI) shows a compositional bias: basic residues. The span at 129–142 (KSSEKSSKDGNKEG) shows a compositional bias: basic and acidic residues. Residues 136–510 (KDGNKEGRWA…EAVSFCSLWK (375 aa)) enclose the GRAS domain. The tract at residues 143 to 205 (RWAEKLLNPC…HLSSSSVSSS (63 aa)) is leucine repeat I (LRI). The interval 224–294 (LLKFYEVSPW…GPPPRVRITV (71 aa)) is VHIID. Residues 259-263 (LHIID) carry the VHIID motif. The interval 312-337 (NYGSQLLGFARSLKINLQISVLDKLQ) is leucine repeat II (LRII). The tract at residues 347–435 (LIVCAQFRLH…RKLMEGEATK (89 aa)) is PFYRE. The SAW stretch occupies residues 438–510 (MNAGDMNEGK…EAVSFCSLWK (73 aa)).

It belongs to the GRAS family. As to expression, expressed in seedlings, roots and flowers.

Its subcellular location is the nucleus. Functionally, probable transcription factor involved in plant development. This chain is Scarecrow-like protein 29 (SCL29), found in Arabidopsis thaliana (Mouse-ear cress).